We begin with the raw amino-acid sequence, 671 residues long: DNA ligase (671 aa).

Residues 32–36, 81–82, and Glu113 contribute to the NAD(+) site; these read DAEYD and SL. Residue Lys115 is the N6-AMP-lysine intermediate of the active site. NAD(+) contacts are provided by Arg136, Glu173, Lys290, and Lys314. Residues Cys408, Cys411, Cys426, and Cys432 each coordinate Zn(2+). The 79-residue stretch at 593-671 folds into the BRCT domain; sequence EIDSPFAGKT…EAEMIRLLGA (79 aa).

Belongs to the NAD-dependent DNA ligase family. LigA subfamily. Mg(2+) is required as a cofactor. It depends on Mn(2+) as a cofactor.

The enzyme catalyses NAD(+) + (deoxyribonucleotide)n-3'-hydroxyl + 5'-phospho-(deoxyribonucleotide)m = (deoxyribonucleotide)n+m + AMP + beta-nicotinamide D-nucleotide.. Functionally, DNA ligase that catalyzes the formation of phosphodiester linkages between 5'-phosphoryl and 3'-hydroxyl groups in double-stranded DNA using NAD as a coenzyme and as the energy source for the reaction. It is essential for DNA replication and repair of damaged DNA. The polypeptide is DNA ligase (Salmonella heidelberg (strain SL476)).